The following is a 634-amino-acid chain: Lamin tail domain-containing protein 2 (634 aa).

The segment at 1–44 (MRWLRPAGRRREQESVSGHLGPPAGAPAAPETPTCLPDTTPHPA) is disordered. Residues 106 to 169 (SHSQEKLLQN…QKSCLLQLAR (64 aa)) adopt a coiled-coil conformation. Polar residues predominate over residues 228–237 (FTNMEPSSKQ). Disordered regions lie at residues 228 to 349 (FTNM…TDPD) and 464 to 575 (HRIP…PAEA). Over residues 276–287 (SSSGGADSDSSS) the composition is skewed to low complexity. Residues 310-321 (SEQALVQAGSYS) are compositionally biased toward polar residues. Over residues 322–337 (RDSEDLQKTHSPRHGE) the composition is skewed to basic and acidic residues. The region spanning 350–468 (HWSPELLQSP…EVLSEHRIPR (119 aa)) is the LTD domain. Residues 502 to 513 (PPRPPRPLRKGR) show a composition bias toward basic residues. Residues 540–550 (HAREGPARPEN) are compositionally biased toward basic and acidic residues.

The chain is Lamin tail domain-containing protein 2 (LMNTD2) from Homo sapiens (Human).